The sequence spans 78 residues: Large ribosomal subunit protein bL28 (78 aa).

The tract at residues 1 to 25 (MSRVCQVTGKRPTVGNNRSHAKNAT) is disordered.

The protein belongs to the bacterial ribosomal protein bL28 family.

This chain is Large ribosomal subunit protein bL28, found in Tolumonas auensis (strain DSM 9187 / NBRC 110442 / TA 4).